Consider the following 440-residue polypeptide: MNQGVPPKISFVSLGCPKALVDSERIITRLRAEGYELARKHDGADIVIVSTCGFLDSAKQESLGAIGEAMAENGKVIVTGCMGAEPEQIEKEYPNLLSITGPQQYESVLDAVHRALPPLHNPHLDLLPPQGIKLTPRHYAYLKISEGCNNRCTFCIIPKLRGDLVSRPADDVLREAEKLVVAGVKELLVVSQDTSAYGIDIKYAPSAWKDREVRARFVDLARELGELGAWVRLQYVYPYPHVDDVIPLMGGNILPYLDIPFQHANTEVLKRMRRPAAQDKTLARIHKWREQCPDLTLRSTFIVGFPGETESEFQDLLDWLDEAQIDRLGCFKYEPVAGATSNALENPVPDEIKTARWNALMARQQKISAQRLKRKVGTRQQVIIDEVGPSVAKGRSKADAPQIDGSVYVASRRPLKVGDIVTVKIERADEYDLHGSVAGF.

Residues 7-117 (PKISFVSLGC…VLDAVHRALP (111 aa)) enclose the MTTase N-terminal domain. Positions 16, 52, 81, 148, 152, and 155 each coordinate [4Fe-4S] cluster. Positions 134–370 (LTPRHYAYLK…MARQQKISAQ (237 aa)) constitute a Radical SAM core domain. Residues 373 to 439 (KRKVGTRQQV…EYDLHGSVAG (67 aa)) enclose the TRAM domain.

Belongs to the methylthiotransferase family. RimO subfamily. Requires [4Fe-4S] cluster as cofactor.

Its subcellular location is the cytoplasm. The enzyme catalyses L-aspartate(89)-[ribosomal protein uS12]-hydrogen + (sulfur carrier)-SH + AH2 + 2 S-adenosyl-L-methionine = 3-methylsulfanyl-L-aspartate(89)-[ribosomal protein uS12]-hydrogen + (sulfur carrier)-H + 5'-deoxyadenosine + L-methionine + A + S-adenosyl-L-homocysteine + 2 H(+). In terms of biological role, catalyzes the methylthiolation of an aspartic acid residue of ribosomal protein uS12. The chain is Ribosomal protein uS12 methylthiotransferase RimO from Afipia carboxidovorans (strain ATCC 49405 / DSM 1227 / KCTC 32145 / OM5) (Oligotropha carboxidovorans).